The following is a 400-amino-acid chain: Phosphoglycerate kinase (400 aa).

Substrate contacts are provided by residues 24-26, arginine 39, 62-65, arginine 121, and arginine 154; these read DFN and HFGR. ATP is bound by residues lysine 205, glycine 296, glutamate 327, and 356-359; that span reads GGDS.

The protein belongs to the phosphoglycerate kinase family. As to quaternary structure, monomer.

It localises to the cytoplasm. It catalyses the reaction (2R)-3-phosphoglycerate + ATP = (2R)-3-phospho-glyceroyl phosphate + ADP. It functions in the pathway carbohydrate degradation; glycolysis; pyruvate from D-glyceraldehyde 3-phosphate: step 2/5. This is Phosphoglycerate kinase from Rippkaea orientalis (strain PCC 8801 / RF-1) (Cyanothece sp. (strain PCC 8801)).